We begin with the raw amino-acid sequence, 23 residues long: Paralytic peptide 2 (23 aa).

The cysteines at positions 7 and 19 are disulfide-linked.

Belongs to the GBP/PSP1/paralytic peptide family. As to expression, hemolymph.

Functionally, causes rapid, rigid paralysis when injected into Lepidopteran larvae. The physiological role may be to reduce hemolymph loss following injury and promote wound healing. In Spodoptera exigua (Beet armyworm), this protein is Paralytic peptide 2.